Consider the following 215-residue polypeptide: Small ribosomal subunit protein uS7 (215 aa).

Belongs to the universal ribosomal protein uS7 family. Part of the 30S ribosomal subunit.

Its function is as follows. One of the primary rRNA binding proteins, it binds directly to 16S rRNA where it nucleates assembly of the head domain of the 30S subunit. Is located at the subunit interface close to the decoding center. The protein is Small ribosomal subunit protein uS7 of Thermococcus celer.